The chain runs to 637 residues: tRNA uridine 5-carboxymethylaminomethyl modification enzyme MnmG (637 aa).

14-19 (GAGHAG) provides a ligand contact to FAD. Residue 279–293 (GPRYCPSIEDKVVRF) participates in NAD(+) binding.

Belongs to the MnmG family. Homodimer. Heterotetramer of two MnmE and two MnmG subunits. Requires FAD as cofactor.

Its subcellular location is the cytoplasm. In terms of biological role, NAD-binding protein involved in the addition of a carboxymethylaminomethyl (cmnm) group at the wobble position (U34) of certain tRNAs, forming tRNA-cmnm(5)s(2)U34. This chain is tRNA uridine 5-carboxymethylaminomethyl modification enzyme MnmG, found in Desulfitobacterium hafniense (strain Y51).